A 342-amino-acid chain; its full sequence is Organic solute transporter alpha-like protein 2 (342 aa).

At 1 to 50 (MLEISPWETLVKLLTDSLLNCTGTHEDVPHAKTFLRSLTTTYIASLAVAT) the chain is on the extracellular side. A glycan (N-linked (GlcNAc...) asparagine) is linked at N20. A helical transmembrane segment spans residues 51–71 (AVTVGTVCLAVLHLIYIHFYI). Residues 72 to 79 (THSSRRLH) are Cytoplasmic-facing. A helical transmembrane segment spans residues 80–100 (IVLLACTAPLVSLLALVAMYM). At 101-109 (PRVWFLSHL) the chain is on the extracellular side. A helical membrane pass occupies residues 110–130 (LSFLYFSFALWVIICLLLHIF). Over 131 to 176 (DGHHALVTKMMQRLQYVEIATPPFCCLFPCLPKVRLEGKKIRWCEL) the chain is Cytoplasmic. Residues 177 to 197 (MVMQAPIVRLFATLVSLVIYF) form a helical membrane-spanning segment. Over 198–208 (EYQDQGLVPLK) the chain is Extracellular. The chain crosses the membrane as a helical span at residues 209–229 (VLDFITLPSLLAGIYGTHILV). Topologically, residues 230-243 (TTVSRMDELISYRY) are cytoplasmic. The helical transmembrane segment at 244–264 (VVVFRLLDFFFMVFGLQQPVF) threads the bilayer. The Extracellular portion of the chain corresponds to 265-290 (DFLARYGAFGCGTVLPAIETSFYWKN). Residues 291–311 (FFTVIEAFCVTLISTVLLQPS) traverse the membrane as a helical segment. Residues 312 to 342 (KSSFFDKHPSCRSMSSARSTITDVDTDESTT) are Cytoplasmic-facing.

Belongs to the OST-alpha family.

The protein resides in the cell membrane. Its function is as follows. Probable transporter. This Caenorhabditis elegans protein is Organic solute transporter alpha-like protein 2 (osta-2).